A 342-amino-acid polypeptide reads, in one-letter code: N-acetyl-gamma-glutamyl-phosphate reductase (342 aa).

Cys-149 is a catalytic residue.

It belongs to the NAGSA dehydrogenase family. Type 1 subfamily.

Its subcellular location is the cytoplasm. The catalysed reaction is N-acetyl-L-glutamate 5-semialdehyde + phosphate + NADP(+) = N-acetyl-L-glutamyl 5-phosphate + NADPH + H(+). It participates in amino-acid biosynthesis; L-arginine biosynthesis; N(2)-acetyl-L-ornithine from L-glutamate: step 3/4. Functionally, catalyzes the NADPH-dependent reduction of N-acetyl-5-glutamyl phosphate to yield N-acetyl-L-glutamate 5-semialdehyde. The polypeptide is N-acetyl-gamma-glutamyl-phosphate reductase (Cereibacter sphaeroides (strain ATCC 17025 / ATH 2.4.3) (Rhodobacter sphaeroides)).